Consider the following 61-residue polypeptide: Short neurotoxin 2 (61 aa).

Disulfide bonds link C3/C23, C17/C40, C42/C53, and C54/C59.

Belongs to the three-finger toxin family. Short-chain subfamily. Type I alpha-neurotoxin sub-subfamily. As to expression, expressed by the venom gland.

It localises to the secreted. Its function is as follows. Binds to muscle nicotinic acetylcholine receptor (nAChR) and inhibit acetylcholine from binding to the receptor, thereby impairing neuromuscular transmission. This chain is Short neurotoxin 2, found in Naja nivea (Cape cobra).